A 423-amino-acid chain; its full sequence is Imidazolonepropionase (423 aa).

Residues histidine 78 and histidine 80 each contribute to the Fe(3+) site. Zn(2+) is bound by residues histidine 78 and histidine 80. 4-imidazolone-5-propanoate contacts are provided by arginine 87, tyrosine 150, and histidine 183. Tyrosine 150 serves as a coordination point for N-formimidoyl-L-glutamate. Histidine 247 lines the Fe(3+) pocket. Histidine 247 provides a ligand contact to Zn(2+). 4-imidazolone-5-propanoate is bound at residue glutamate 250. Aspartate 322 is a Fe(3+) binding site. Residue aspartate 322 participates in Zn(2+) binding. The N-formimidoyl-L-glutamate site is built by asparagine 324 and glycine 326. Serine 327 serves as a coordination point for 4-imidazolone-5-propanoate.

Belongs to the metallo-dependent hydrolases superfamily. HutI family. Requires Zn(2+) as cofactor. The cofactor is Fe(3+).

Its subcellular location is the cytoplasm. It catalyses the reaction 4-imidazolone-5-propanoate + H2O = N-formimidoyl-L-glutamate. It functions in the pathway amino-acid degradation; L-histidine degradation into L-glutamate; N-formimidoyl-L-glutamate from L-histidine: step 3/3. Catalyzes the hydrolytic cleavage of the carbon-nitrogen bond in imidazolone-5-propanoate to yield N-formimidoyl-L-glutamate. It is the third step in the universal histidine degradation pathway. The polypeptide is Imidazolonepropionase (Bacillus mycoides (strain KBAB4) (Bacillus weihenstephanensis)).